Consider the following 252-residue polypeptide: Imidazole glycerol phosphate synthase subunit HisF (252 aa).

Active-site residues include Asp-11 and Asp-130.

It belongs to the HisA/HisF family. As to quaternary structure, heterodimer of HisH and HisF.

It is found in the cytoplasm. The catalysed reaction is 5-[(5-phospho-1-deoxy-D-ribulos-1-ylimino)methylamino]-1-(5-phospho-beta-D-ribosyl)imidazole-4-carboxamide + L-glutamine = D-erythro-1-(imidazol-4-yl)glycerol 3-phosphate + 5-amino-1-(5-phospho-beta-D-ribosyl)imidazole-4-carboxamide + L-glutamate + H(+). Its pathway is amino-acid biosynthesis; L-histidine biosynthesis; L-histidine from 5-phospho-alpha-D-ribose 1-diphosphate: step 5/9. Functionally, IGPS catalyzes the conversion of PRFAR and glutamine to IGP, AICAR and glutamate. The HisF subunit catalyzes the cyclization activity that produces IGP and AICAR from PRFAR using the ammonia provided by the HisH subunit. This is Imidazole glycerol phosphate synthase subunit HisF from Lactiplantibacillus plantarum (strain ATCC BAA-793 / NCIMB 8826 / WCFS1) (Lactobacillus plantarum).